The sequence spans 274 residues: uncharacterized protein (274 aa).

The tract at residues 235–274 (ETFDTQQDPKKTPETDKNAAYKGKEKKGKKEERGPRSIMK) is disordered. Residues 241–274 (QDPKKTPETDKNAAYKGKEKKGKKEERGPRSIMK) show a composition bias toward basic and acidic residues.

This is an uncharacterized protein from Treponema pallidum (strain Nichols).